The chain runs to 335 residues: Glucokinase (335 aa).

Residue 11-16 participates in ATP binding; the sequence is ADIGGT.

This sequence belongs to the bacterial glucokinase family.

It is found in the cytoplasm. It carries out the reaction D-glucose + ATP = D-glucose 6-phosphate + ADP + H(+). This Stenotrophomonas maltophilia (strain K279a) protein is Glucokinase.